The following is a 182-amino-acid chain: Dipetalodipin (182 aa).

Positions 1–18 are cleaved as a signal peptide; the sequence is MKTIIAAIFLGILMHAFA. Disulfide bonds link Cys-21/Cys-134, Cys-55/Cys-181, and Cys-87/Cys-103.

This sequence belongs to the calycin superfamily. Triabin family. As to expression, expressed in salivary glands.

The protein resides in the secreted. Functionally, inhibits platelet aggregation, vasoconstriction, and angiogenesis through binding to distinct eicosanoids involved in inflammation (acts as a scavenger), and has a role in inhibiting host innate immunity by impairing platelet-assisted formation of neutrophil extracellular traps (NETs). Inhibits platelet aggregation by collagen (IC(50)=30 nM), thromboxane A2 mimetic (TXA2 mimetic), or arachidonic acid (AA) without affecting aggregation induced by ADP, convulxin (GP6 agonist), PMA, and ristocetin (vWF-dependent platelet agglutinator). Binds with high affinity to TXA2, TXB2, prostaglandine H2 mimetic (PGH2 mimetic), PGD2, PGJ2, and PGF2alpha. Also interacts with 15(S)-hydroxyeicosatetraenoic acid (HETE), being the first calycin/lipocalin described to date to bind to a derivative of 15-lipoxygenase. Binding is not observed to other prostaglandins, leukotrienes, HETEs, lipids, and biogenic amines. It prevents contraction of rat uterus stimulated by PGF2alpha and induces relaxation of aorta previously contracted with TXA2 mimetic. In addition, it inhibits angiogenesis mediated by 15(S)-HETE and does not enhance inhibition of collagen-induced platelet aggregation by SQ29548 (TXA2 antagonist) and indomethacin. Also impairs platelet-assisted formation of neutrophil extracellular traps (NETs). NETs are web-like structures of DNA and proteins that play an important role in killing of pathogens. In addition, NETs are implicated in thrombus formation. In vivo, this protein exhibits antithrombotic activity in two distinct mice models that are highly dependent on platelets. It is noteworthy that it inhibits thrombosis without promoting excessive bleeding. This Dipetalogaster maximus (Blood-sucking bug) protein is Dipetalodipin.